Consider the following 457-residue polypeptide: NADP-specific glutamate dehydrogenase (457 aa).

K111 is an active-site residue.

It belongs to the Glu/Leu/Phe/Val dehydrogenases family. In terms of assembly, homohexamer.

The catalysed reaction is L-glutamate + NADP(+) + H2O = 2-oxoglutarate + NH4(+) + NADPH + H(+). This Agaricus bisporus (White button mushroom) protein is NADP-specific glutamate dehydrogenase (gdhA).